Here is a 297-residue protein sequence, read N- to C-terminus: 4-hydroxy-tetrahydrodipicolinate synthase (297 aa).

A pyruvate-binding site is contributed by threonine 50. Tyrosine 138 functions as the Proton donor/acceptor in the catalytic mechanism. Catalysis depends on lysine 166, which acts as the Schiff-base intermediate with substrate. A pyruvate-binding site is contributed by isoleucine 208.

Belongs to the DapA family. In terms of assembly, homotetramer; dimer of dimers.

It localises to the cytoplasm. It carries out the reaction L-aspartate 4-semialdehyde + pyruvate = (2S,4S)-4-hydroxy-2,3,4,5-tetrahydrodipicolinate + H2O + H(+). It participates in amino-acid biosynthesis; L-lysine biosynthesis via DAP pathway; (S)-tetrahydrodipicolinate from L-aspartate: step 3/4. In terms of biological role, catalyzes the condensation of (S)-aspartate-beta-semialdehyde [(S)-ASA] and pyruvate to 4-hydroxy-tetrahydrodipicolinate (HTPA). The sequence is that of 4-hydroxy-tetrahydrodipicolinate synthase from Gluconobacter oxydans (strain 621H) (Gluconobacter suboxydans).